Here is a 217-residue protein sequence, read N- to C-terminus: Somatotropin (217 aa).

An N-terminal signal peptide occupies residues methionine 1–alanine 27. Zn(2+) is bound at residue histidine 46. A disulfide bridge links cysteine 79 with cysteine 190. Position 132 is a phosphoserine (serine 132). Glutamate 199 serves as a coordination point for Zn(2+). Cysteine 207 and cysteine 215 are oxidised to a cystine.

Belongs to the somatotropin/prolactin family.

Its subcellular location is the secreted. Its function is as follows. Plays an important role in growth control. Its major role in stimulating body growth is to stimulate the liver and other tissues to secrete IGF1. It stimulates both the differentiation and proliferation of myoblasts. It also stimulates amino acid uptake and protein synthesis in muscle and other tissues. This is Somatotropin (GH1) from Xanthonycticebus pygmaeus (Pygmy slow loris).